Reading from the N-terminus, the 150-residue chain is MQVILLDKVANLGSLGDQVNVKAGYARNFLVPQGKAVPATKKNVEFFEARRAELEAKLADVLTAAEARATKIKELGSVTIASKAGDEGKLFGSIGTRDIADAVTAAGVDIAKSEVRLPNGVLRTIGEHVVSFQVHSDVFAELNVVVVAEA.

Belongs to the bacterial ribosomal protein bL9 family.

Functionally, binds to the 23S rRNA. This Pectobacterium atrosepticum (strain SCRI 1043 / ATCC BAA-672) (Erwinia carotovora subsp. atroseptica) protein is Large ribosomal subunit protein bL9.